The primary structure comprises 267 residues: Putative phosphoenolpyruvate synthase regulatory protein (267 aa).

147–154 (GVSRSGKT) lines the ADP pocket.

It belongs to the pyruvate, phosphate/water dikinase regulatory protein family. PSRP subfamily.

It catalyses the reaction [pyruvate, water dikinase] + ADP = [pyruvate, water dikinase]-phosphate + AMP + H(+). It carries out the reaction [pyruvate, water dikinase]-phosphate + phosphate + H(+) = [pyruvate, water dikinase] + diphosphate. Functionally, bifunctional serine/threonine kinase and phosphorylase involved in the regulation of the phosphoenolpyruvate synthase (PEPS) by catalyzing its phosphorylation/dephosphorylation. This is Putative phosphoenolpyruvate synthase regulatory protein from Cupriavidus necator (strain ATCC 17699 / DSM 428 / KCTC 22496 / NCIMB 10442 / H16 / Stanier 337) (Ralstonia eutropha).